The following is a 228-amino-acid chain: 7-cyano-7-deazaguanine synthase (228 aa).

8–18 is an ATP binding site; that stretch reads LSGGMDSATTL. The Zn(2+) site is built by Cys188, Cys198, Cys201, and Cys204.

The protein belongs to the QueC family. Zn(2+) is required as a cofactor.

It carries out the reaction 7-carboxy-7-deazaguanine + NH4(+) + ATP = 7-cyano-7-deazaguanine + ADP + phosphate + H2O + H(+). Its pathway is purine metabolism; 7-cyano-7-deazaguanine biosynthesis. Catalyzes the ATP-dependent conversion of 7-carboxy-7-deazaguanine (CDG) to 7-cyano-7-deazaguanine (preQ(0)). In Nitrosomonas europaea (strain ATCC 19718 / CIP 103999 / KCTC 2705 / NBRC 14298), this protein is 7-cyano-7-deazaguanine synthase.